The following is a 418-amino-acid chain: Protein MAEA homolog (418 aa).

Residues 141–173 form the LisH domain; it reads NNTKLKRILVDYMLRMSYFETATKLSESSNIMD. In terms of domain architecture, CTLH spans 179-236; it reads IFREAKKVIDALKNREVASALTWCADNKTRLKKSKSKFEFQLRLQEFIELVRVDTAES. Residues 330–403 form an RING-Gid-type zinc finger; the sequence is CTKEDPLSQE…NGGKITCPRT (74 aa).

Interacts with RANBPM.

The protein resides in the cytoplasm. This is Protein MAEA homolog from Arabidopsis thaliana (Mouse-ear cress).